A 285-amino-acid chain; its full sequence is Troponin T, cardiac muscle (285 aa).

The span at 1 to 58 (MSDVEEAVEEYEEQEEAAEEEHEEAVEEEAGGEAEAGEPCTAEDGEEEEGREAEDGPV) shows a compositional bias: acidic residues. Disordered regions lie at residues 1–83 (MSDV…GERV) and 111–206 (RKKE…EKKK). N-acetylserine is present on serine 2. The residue at position 2 (serine 2) is a Phosphoserine; by CK2. Positions 66-77 (RPFMPNLVPPKI) are enriched in pro residues. Basic and acidic residues-rich tracts occupy residues 111–171 (RKKE…DEAR) and 190–206 (QTER…EKKK). Threonine 191 bears the Phosphothreonine; by PKC/PRKCA mark. Serine 195 carries the post-translational modification Phosphoserine; by PKC/PRKCA. Residue threonine 200 is modified to Phosphothreonine; by PKC/PRKCA and RAF1. Threonine 281 bears the Phosphothreonine; by PKC/PRKCA mark.

Belongs to the troponin T family. The N-terminus is blocked. Post-translationally, phosphorylation at Thr-200 by PRKCA induces significant reduction in myofilament calcium sensitivity and actomyosin ATPase activity.

Functionally, troponin T is the tropomyosin-binding subunit of troponin, the thin filament regulatory complex which confers calcium-sensitivity to striated muscle actomyosin ATPase activity. This is Troponin T, cardiac muscle (TNNT2) from Bos taurus (Bovine).